Here is a 287-residue protein sequence, read N- to C-terminus: MLPATFKLCAGISYRHTRNMTGLRKNAMVAIHHELNMLAGPNPSSWISHVRRRSSLLSSRIEEEQGYNEAEVSYVKQGEEALQKSISILGDQDGWTTEIIAANGDKVLSKVLPDVGKVFKLEVLLDQRSDNLYGELVGNMEQMGDWNPNVKEVKILQKIGQETMVTHEVSGPTPGNVVGPRDFVSVRCAKRRGSTCFLAGMSTQHPTMPEQRGVVRAENGPTCIVMRPSADDPNKTKFTWLLSIDLKGWIPKTIINKVLSQTQVDFANHLRQRMADNSVSKEMAPAC.

The N-terminal 61 residues, 1–61 (MLPATFKLCA…RRSSLLSSRI (61 aa)), are a transit peptide targeting the mitochondrion. Residues 66 to 279 (GYNEAEVSYV…LRQRMADNSV (214 aa)) form the START domain.

As to quaternary structure, may interact with TSPO.

The protein resides in the mitochondrion. The enzyme catalyses cholesterol(in) = cholesterol(out). It participates in steroid metabolism; cholesterol metabolism. In terms of biological role, plays a key role in steroid hormone synthesis by enhancing the metabolism of cholesterol into pregnenolone. Mediates the transfer of cholesterol from the outer mitochondrial membrane to the inner mitochondrial membrane where it is cleaved to pregnenolone. This is Steroidogenic acute regulatory protein, mitochondrial (star) from Salvelinus fontinalis (Brook trout).